Consider the following 203-residue polypeptide: MKREGVLYIISAPSGAGKTTLCKEIIDIFPHLRHSVSYTTRQPRAGEVHGKDYYFISMDEFRSMVDKGEFAEWAEVHGNCYGTSIRTLEECRITGIDLILDIDIQGARQLKERYEGGVYIFILPPSYEELRRRLNGRSSDSDDVISRRIDAAAGEIRESRWYDYIIVNDQFSRAVEELKSVVVAERCRTFRVLETVTERFDMG.

Residues 5–183 enclose the Guanylate kinase-like domain; the sequence is GVLYIISAPS…AVEELKSVVV (179 aa). 12-19 contributes to the ATP binding site; the sequence is APSGAGKT.

This sequence belongs to the guanylate kinase family.

It localises to the cytoplasm. It carries out the reaction GMP + ATP = GDP + ADP. Its function is as follows. Essential for recycling GMP and indirectly, cGMP. This chain is Guanylate kinase, found in Geobacter metallireducens (strain ATCC 53774 / DSM 7210 / GS-15).